Consider the following 664-residue polypeptide: Probable LRR receptor-like serine/threonine-protein kinase At1g63430 (664 aa).

An N-terminal signal peptide occupies residues 1–22 (MRSKYFCSLALVLGLFFVSCDG). Residues 23–288 (FASNEVQALR…KHHRASKPKW (266 aa)) are Extracellular-facing. The N-linked (GlcNAc...) asparagine glycan is linked to N75. 4 LRR repeats span residues 94–116 (YLQE…IGNL), 118–140 (NLKI…IGSL), 142–165 (GIMI…GNLK), and 166–178 (YLRE…NRLQ). N197 carries N-linked (GlcNAc...) asparagine glycosylation. Residues 289-309 (LLALEIVTGSMVGLLLLVALF) traverse the membrane as a helical segment. Residues 310–664 (SAVHRWNNRS…LAWAELALDS (355 aa)) lie on the Cytoplasmic side of the membrane. Positions 360–642 (EDFSNIIGLS…ELCETLESRI (283 aa)) constitute a Protein kinase domain.

Belongs to the protein kinase superfamily. Ser/Thr protein kinase family.

The protein resides in the cell membrane. It catalyses the reaction L-seryl-[protein] + ATP = O-phospho-L-seryl-[protein] + ADP + H(+). It carries out the reaction L-threonyl-[protein] + ATP = O-phospho-L-threonyl-[protein] + ADP + H(+). The polypeptide is Probable LRR receptor-like serine/threonine-protein kinase At1g63430 (Arabidopsis thaliana (Mouse-ear cress)).